The following is an 89-amino-acid chain: OMEGA-ectatommitoxin(02)-Rm1a (89 aa).

Residues 1-30 (MKDSYISIVIAYLMVTFILVSSMPIEGEKG) form the signal peptide. Cystine bridges form between Cys-39/Cys-52, Cys-47/Cys-68, and Cys-70/Cys-79. The EGF-like domain occupies 43–80 (YANYCFNGKCVHVVAQDEPGKPCYSCICDKFYIGKRCG).

It belongs to the EGF domain peptide family. As to expression, expressed by the venom gland.

It is found in the secreted. Ant peptide with probable defensive activity which acts as a potent agonist of the mammalian epidermal growth factor receptor (EGFR). Mimics, both structurally and functionally, vertebrate epidermal growth factor (EGF) peptide hormones. In vivo, intraplantar injection in mice causes long-lasting (several days) hypersensitivity of the injected paw to both mechanical and thermal stimuli. Its long-lasting effect is unusual for venom toxins whose effects are usually immediate. One possible explanation is that it would reduce the duration of a nest attack, discourage future attacks, or enhance the actions of subsequent exposure to other pain-inducing venom peptides. In Rhytidoponera metallica (Australian green-headed ant), this protein is OMEGA-ectatommitoxin(02)-Rm1a.